A 207-amino-acid chain; its full sequence is LexA repressor (207 aa).

The segment at residues 33-52 (VKEMSETFGISHASVHDRIN) is a DNA-binding region (H-T-H motif). Residues serine 129 and lysine 166 each act as for autocatalytic cleavage activity in the active site.

It belongs to the peptidase S24 family. Homodimer.

It catalyses the reaction Hydrolysis of Ala-|-Gly bond in repressor LexA.. Functionally, represses a number of genes involved in the response to DNA damage (SOS response), including recA and lexA. In the presence of single-stranded DNA, RecA interacts with LexA causing an autocatalytic cleavage which disrupts the DNA-binding part of LexA, leading to derepression of the SOS regulon and eventually DNA repair. This is LexA repressor from Oleidesulfovibrio alaskensis (strain ATCC BAA-1058 / DSM 17464 / G20) (Desulfovibrio alaskensis).